The following is a 354-amino-acid chain: Ferredoxin--NADP reductase, chloroplastic (354 aa).

A chloroplast-targeting transit peptide spans 1-35 (MASLRKPSNHADRACSRRLRVATRVAGRRMCRPVA). The region spanning 69 to 198 (KAPFKAKVRS…TGPTGKVLLL (130 aa)) is the FAD-binding FR-type domain. 2 positions are modified to N6,N6,N6-trimethyllysine: K118 and K124. FAD contacts are provided by residues 130 to 133 (RLYS), 151 to 153 (CVR), and Y157. NADP(+)-binding residues include S133 and R153. The residue at position 170 (K170) is an N6,N6-dimethyllysine. Residues 172-174 (LCS) and T213 contribute to the FAD site. NADP(+) is bound by residues T213, 245-246 (VG), 275-276 (SR), K285, 313-314 (GL), and E352.

This sequence belongs to the ferredoxin--NADP reductase type 1 family. The cofactor is FAD.

The protein resides in the plastid. It is found in the chloroplast stroma. The protein localises to the chloroplast thylakoid membrane. It catalyses the reaction 2 reduced [2Fe-2S]-[ferredoxin] + NADP(+) + H(+) = 2 oxidized [2Fe-2S]-[ferredoxin] + NADPH. It participates in energy metabolism; photosynthesis. Its function is as follows. May play a key role in regulating the relative amounts of cyclic and non-cyclic electron flow to meet the demands of the plant for ATP and reducing power. In Chlamydomonas reinhardtii (Chlamydomonas smithii), this protein is Ferredoxin--NADP reductase, chloroplastic (PETH).